The primary structure comprises 382 residues: ATP phosphoribosyltransferase regulatory subunit (382 aa).

Belongs to the class-II aminoacyl-tRNA synthetase family. HisZ subfamily. In terms of assembly, heteromultimer composed of HisG and HisZ subunits.

The protein localises to the cytoplasm. It functions in the pathway amino-acid biosynthesis; L-histidine biosynthesis; L-histidine from 5-phospho-alpha-D-ribose 1-diphosphate: step 1/9. Required for the first step of histidine biosynthesis. May allow the feedback regulation of ATP phosphoribosyltransferase activity by histidine. This is ATP phosphoribosyltransferase regulatory subunit from Lacticaseibacillus casei (strain BL23) (Lactobacillus casei).